We begin with the raw amino-acid sequence, 56 residues long: uncharacterized protein (56 aa).

Residues 12 to 32 traverse the membrane as a helical segment; the sequence is GITLFPYFAILILILAILVVG. A hydrophobic region spans residues 19–31; it reads FAILILILAILVV.

Its subcellular location is the membrane. This is an uncharacterized protein from Chenopodium amaranticolor (Quinoa).